The following is a 207-amino-acid chain: dITP/XTP pyrophosphatase (207 aa).

11-16 (TGNPGK) provides a ligand contact to substrate. Residue Asp-72 is the Proton acceptor of the active site. Residue Asp-72 participates in Mg(2+) binding. Substrate-binding positions include Ser-73, 154-157 (FGYD), Lys-177, and 182-183 (HR).

Belongs to the HAM1 NTPase family. As to quaternary structure, homodimer. Requires Mg(2+) as cofactor.

It carries out the reaction XTP + H2O = XMP + diphosphate + H(+). It catalyses the reaction dITP + H2O = dIMP + diphosphate + H(+). The catalysed reaction is ITP + H2O = IMP + diphosphate + H(+). Functionally, pyrophosphatase that catalyzes the hydrolysis of nucleoside triphosphates to their monophosphate derivatives, with a high preference for the non-canonical purine nucleotides XTP (xanthosine triphosphate), dITP (deoxyinosine triphosphate) and ITP. Seems to function as a house-cleaning enzyme that removes non-canonical purine nucleotides from the nucleotide pool, thus preventing their incorporation into DNA/RNA and avoiding chromosomal lesions. This Thermus thermophilus (strain ATCC 27634 / DSM 579 / HB8) protein is dITP/XTP pyrophosphatase.